A 514-amino-acid chain; its full sequence is Protein Tube (514 aa).

Disordered regions lie at residues 226–250 (VPQQ…RSSR), 255–274 (TASN…SNTA), 324–343 (LDAG…STST), 366–385 (ASDA…VPDM), and 413–514 (NGAK…ELQQ). The span at 259–274 (VAPTTASNAPSASNTA) shows a compositional bias: low complexity. The segment covering 422 to 433 (ADNNSSGTNSLS) has biased composition (polar residues). The segment covering 434 to 460 (NDDDEQKEDDDDDDDDDVVDVDDEEAD) has biased composition (acidic residues). Over residues 477-514 (TTVTCTSGENSFEFTNDSSSASNDDYTNNIPNLSELQQ) the composition is skewed to polar residues.

As to expression, maternal and zygotic gene product.

The protein resides in the cytoplasm. Required for the determination of embryonic dorsoventral polarity. Is involved in transduction of information regulating nuclear import of dorsal protein. The sequence is that of Protein Tube (tub) from Drosophila virilis (Fruit fly).